Here is a 211-residue protein sequence, read N- to C-terminus: Hypoxanthine-guanine phosphoribosyltransferase (211 aa).

A disordered region spans residues 1-20; that stretch reads MSNSAKSPSGPVGDEGRRNY. Residues K66, 125 to 133, K157, and D185 contribute to the GMP site; that span reads EDIVDSAIT. D129 acts as the Proton acceptor in catalysis. A Mg(2+)-binding site is contributed by D185.

This sequence belongs to the purine/pyrimidine phosphoribosyltransferase family. The cofactor is Mg(2+).

It localises to the cytoplasm. It carries out the reaction IMP + diphosphate = hypoxanthine + 5-phospho-alpha-D-ribose 1-diphosphate. The catalysed reaction is GMP + diphosphate = guanine + 5-phospho-alpha-D-ribose 1-diphosphate. The protein operates within purine metabolism; IMP biosynthesis via salvage pathway; IMP from hypoxanthine: step 1/1. Its function is as follows. Converts guanine to guanosine monophosphate, and hypoxanthine to inosine monophosphate. Transfers the 5-phosphoribosyl group from 5-phosphoribosylpyrophosphate onto the purine. Plays a central role in the generation of purine nucleotides through the purine salvage pathway. The polypeptide is Hypoxanthine-guanine phosphoribosyltransferase (Leishmania donovani).